Consider the following 491-residue polypeptide: Ketol-acid reductoisomerase (NADP(+)) (491 aa).

A KARI N-terminal Rossmann domain is found at 15 to 208; sequence AQLGKCRFMG…GGHRAGVLES (194 aa). NADP(+) contacts are provided by residues 45-48, Arg68, Arg76, Ser78, and 108-110; these read CGAQ and DKQ. The active site involves His132. Gly158 lines the NADP(+) pocket. KARI C-terminal knotted domains lie at 209-344 and 345-484; these read SFVA…TAPQ and YEGK…MTDM. Residues Asp217, Glu221, Glu389, and Glu393 each contribute to the Mg(2+) site. Ser414 is a binding site for substrate.

This sequence belongs to the ketol-acid reductoisomerase family. It depends on Mg(2+) as a cofactor.

It carries out the reaction (2R)-2,3-dihydroxy-3-methylbutanoate + NADP(+) = (2S)-2-acetolactate + NADPH + H(+). The enzyme catalyses (2R,3R)-2,3-dihydroxy-3-methylpentanoate + NADP(+) = (S)-2-ethyl-2-hydroxy-3-oxobutanoate + NADPH + H(+). It functions in the pathway amino-acid biosynthesis; L-isoleucine biosynthesis; L-isoleucine from 2-oxobutanoate: step 2/4. The protein operates within amino-acid biosynthesis; L-valine biosynthesis; L-valine from pyruvate: step 2/4. Functionally, involved in the biosynthesis of branched-chain amino acids (BCAA). Catalyzes an alkyl-migration followed by a ketol-acid reduction of (S)-2-acetolactate (S2AL) to yield (R)-2,3-dihydroxy-isovalerate. In the isomerase reaction, S2AL is rearranged via a Mg-dependent methyl migration to produce 3-hydroxy-3-methyl-2-ketobutyrate (HMKB). In the reductase reaction, this 2-ketoacid undergoes a metal-dependent reduction by NADPH to yield (R)-2,3-dihydroxy-isovalerate. The chain is Ketol-acid reductoisomerase (NADP(+)) from Escherichia coli O7:K1 (strain IAI39 / ExPEC).